The sequence spans 280 residues: Small ribosomal subunit protein uS2 (280 aa).

This sequence belongs to the universal ribosomal protein uS2 family.

This Desulforapulum autotrophicum (strain ATCC 43914 / DSM 3382 / VKM B-1955 / HRM2) (Desulfobacterium autotrophicum) protein is Small ribosomal subunit protein uS2.